Consider the following 378-residue polypeptide: Inner membrane protein YibH (378 aa).

Topologically, residues 1–3 (MDL) are periplasmic. The helical transmembrane segment at 4–24 (LIVLTYVALAWAVFKIFRIPV) threads the bilayer. Residues 25–26 (NQ) are Cytoplasmic-facing. The helical transmembrane segment at 27 to 47 (WTLATAALGGVFLVSGLILLM) threads the bilayer. Residues 48–54 (NYNHPYT) are Periplasmic-facing. A helical membrane pass occupies residues 55–75 (FTAQKAVIAIPITPQVTGIVT). Topologically, residues 76-232 (EVTDKNNQLI…RAPSNGYVTQ (157 aa)) are cytoplasmic. The chain crosses the membrane as a helical span at residues 233–253 (VLIRPGTYAAALPLRPVMVFI). Residues 254–280 (PEQKRQIVAQFRQNSLLRLKPGDDAEV) lie on the Periplasmic side of the membrane. The chain crosses the membrane as a helical span at residues 281–301 (VFNALPGQVFHGKLTSILPVV). At 302-309 (PGGSYQAQ) the chain is on the cytoplasmic side. A helical transmembrane segment spans residues 310 to 330 (GVLQSLTVVPGTDGVLGTIEL). At 331–378 (DPNDDIDALPDGIYAQVAVYSDHFSHVSVMRKVLLRMTSWMHYLYLDH) the chain is on the periplasmic side.

This sequence belongs to the membrane fusion protein (MFP) (TC 8.A.1) family.

Its subcellular location is the cell inner membrane. The chain is Inner membrane protein YibH (yibH) from Escherichia coli O157:H7.